A 350-amino-acid chain; its full sequence is Geranylgeranyl pyrophosphate synthase (350 aa).

Residues lysine 66, arginine 69, and histidine 98 each contribute to the isopentenyl diphosphate site. Positions 105 and 109 each coordinate Mg(2+). Arginine 114 contributes to the dimethylallyl diphosphate binding site. Position 115 (arginine 115) interacts with isopentenyl diphosphate. Lysine 200, threonine 201, glutamine 236, asparagine 243, and lysine 263 together coordinate dimethylallyl diphosphate.

The protein belongs to the FPP/GGPP synthase family. Requires Mg(2+) as cofactor.

The enzyme catalyses isopentenyl diphosphate + dimethylallyl diphosphate = (2E)-geranyl diphosphate + diphosphate. The catalysed reaction is isopentenyl diphosphate + (2E)-geranyl diphosphate = (2E,6E)-farnesyl diphosphate + diphosphate. It catalyses the reaction isopentenyl diphosphate + (2E,6E)-farnesyl diphosphate = (2E,6E,10E)-geranylgeranyl diphosphate + diphosphate. Its pathway is secondary metabolite biosynthesis; terpenoid biosynthesis. Its function is as follows. Geranylgeranyl pyrophosphate synthase; part of the gene cluster that mediates the biosynthesis of pleuromutilin, a tricyclic diterpene showing antibacterial properties. The geranylgeranyl diphosphate (GGPP) synthase catalyzes the first step in pleuromutilin biosynthesis. GGPP is then substrate of the premutilin synthase (PS) to yield premutilin. Premutilin synthase is a bifunctional enzyme composed of the fusion of a class II diterpene cyclase (DTC) and a class I diterpene synthase (DTS), with the corresponding domains and active sites containing characteristic aspartate-rich motifs. GGPP is first converted to mutildienyl-diphosphate (MPP) at the class II DTC site. MPP is subsequently further cyclized at the class I DTS site, followed by a 1,5-hydride shift and addition of water prior to terminating deprotonation, to yield premutilin. In addition to the aforementioned GGPP synthase and bifunctional diterpene synthase, the cluster also contains three cytochrome P450 monooxygenases, a short-chain alcohol dehydrogenase, and an acyltransferase, involved in the conversion of premutilin to pleuromutilin. The cytochrome P450 monooxygenases P450-1 and P450-2 hydroxylate premutilin at C-11 and C-3, respectively, producing 11-hydroxypremutilin and 3-hydroxypremutilin. The combination of the actions of both ple5 and ple6 leads to the production of 3,11-dihydroxypremutilin. The short chain dehydrogenase SDR further converts 3,11-dihydroxypremutilin into mutilin. The acetyltransferase ATF then acetylates mutilin to produce 14-O-acetylmutilin. Finally, the cytochrome P450 monooxygenase P450-3 catalyzes hydroxylation on the alpha position of the acetyl side chain of 14-O-acetylmutilin to yield pleuromutilin. This chain is Geranylgeranyl pyrophosphate synthase, found in Clitopilus passeckerianus (Pleurotus passeckerianus).